The sequence spans 352 residues: uncharacterized protein (352 aa).

To M.pneumoniae MPN_633 (in the N-terminal section), and M.pneumoniae MPN_634 (in the C-terminal section).

This is an uncharacterized protein from Mycoplasma pneumoniae (strain ATCC 29342 / M129 / Subtype 1) (Mycoplasmoides pneumoniae).